The following is a 117-amino-acid chain: Large ribosomal subunit protein bL20 (117 aa).

The protein belongs to the bacterial ribosomal protein bL20 family.

Binds directly to 23S ribosomal RNA and is necessary for the in vitro assembly process of the 50S ribosomal subunit. It is not involved in the protein synthesizing functions of that subunit. The chain is Large ribosomal subunit protein bL20 from Gloeothece citriformis (strain PCC 7424) (Cyanothece sp. (strain PCC 7424)).